A 208-amino-acid polypeptide reads, in one-letter code: FMN-dependent NADH:quinone oxidoreductase 1 (208 aa).

Belongs to the azoreductase type 1 family. In terms of assembly, homodimer. Requires FMN as cofactor.

It catalyses the reaction 2 a quinone + NADH + H(+) = 2 a 1,4-benzosemiquinone + NAD(+). The catalysed reaction is N,N-dimethyl-1,4-phenylenediamine + anthranilate + 2 NAD(+) = 2-(4-dimethylaminophenyl)diazenylbenzoate + 2 NADH + 2 H(+). In terms of biological role, quinone reductase that provides resistance to thiol-specific stress caused by electrophilic quinones. Also exhibits azoreductase activity. Catalyzes the reductive cleavage of the azo bond in aromatic azo compounds to the corresponding amines. The sequence is that of FMN-dependent NADH:quinone oxidoreductase 1 from Bacillus cereus (strain ATCC 14579 / DSM 31 / CCUG 7414 / JCM 2152 / NBRC 15305 / NCIMB 9373 / NCTC 2599 / NRRL B-3711).